A 440-amino-acid polypeptide reads, in one-letter code: Chromosome partition protein MukF (440 aa).

The segment at 208-236 is leucine-zipper; the sequence is LSETSGTLRELQDTLEAAGDKLQANLLRI.

It belongs to the MukF family. As to quaternary structure, interacts, and probably forms a ternary complex, with MukE and MukB via its C-terminal region. The complex formation is stimulated by calcium or magnesium. It is required for an interaction between MukE and MukB.

It localises to the cytoplasm. The protein localises to the nucleoid. In terms of biological role, involved in chromosome condensation, segregation and cell cycle progression. May participate in facilitating chromosome segregation by condensation DNA from both sides of a centrally located replisome during cell division. Not required for mini-F plasmid partitioning. Probably acts via its interaction with MukB and MukE. Overexpression results in anucleate cells. It has a calcium binding activity. This is Chromosome partition protein MukF from Photorhabdus laumondii subsp. laumondii (strain DSM 15139 / CIP 105565 / TT01) (Photorhabdus luminescens subsp. laumondii).